Reading from the N-terminus, the 856-residue chain is DNA mismatch repair protein MutS (856 aa).

607-614 (GPNMAGKS) contributes to the ATP binding site.

This sequence belongs to the DNA mismatch repair MutS family.

In terms of biological role, this protein is involved in the repair of mismatches in DNA. It is possible that it carries out the mismatch recognition step. This protein has a weak ATPase activity. The sequence is that of DNA mismatch repair protein MutS from Cytophaga hutchinsonii (strain ATCC 33406 / DSM 1761 / CIP 103989 / NBRC 15051 / NCIMB 9469 / D465).